The sequence spans 372 residues: Alanine dehydrogenase 2 (372 aa).

H95 is an active-site residue. 169-199 (KVTIIGGGQAGTNAAKIALGLGADVTILDVN) is a binding site for NAD(+).

It belongs to the AlaDH/PNT family.

It catalyses the reaction L-alanine + NAD(+) + H2O = pyruvate + NH4(+) + NADH + H(+). It functions in the pathway amino-acid degradation; L-alanine degradation via dehydrogenase pathway; NH(3) and pyruvate from L-alanine: step 1/1. Functionally, may play a role in cell wall synthesis as L-alanine is an important constituent of the peptidoglycan layer. The protein is Alanine dehydrogenase 2 (ald2) of Staphylococcus aureus (strain Mu50 / ATCC 700699).